Reading from the N-terminus, the 166-residue chain is NADH-quinone oxidoreductase subunit C (166 aa).

It belongs to the complex I 30 kDa subunit family. NDH-1 is composed of 14 different subunits. Subunits NuoB, C, D, E, F, and G constitute the peripheral sector of the complex.

The protein localises to the cell inner membrane. The enzyme catalyses a quinone + NADH + 5 H(+)(in) = a quinol + NAD(+) + 4 H(+)(out). In terms of biological role, NDH-1 shuttles electrons from NADH, via FMN and iron-sulfur (Fe-S) centers, to quinones in the respiratory chain. The immediate electron acceptor for the enzyme in this species is believed to be a menaquinone. Couples the redox reaction to proton translocation (for every two electrons transferred, four hydrogen ions are translocated across the cytoplasmic membrane), and thus conserves the redox energy in a proton gradient. The polypeptide is NADH-quinone oxidoreductase subunit C (Chlorobium phaeobacteroides (strain DSM 266 / SMG 266 / 2430)).